The following is a 233-amino-acid chain: Riboflavin kinase (233 aa).

The H-T-H motif-like stretch occupies residues 1–104; that stretch reads MVRDIKTFKF…YKKIFDDEGT (104 aa). Residues 105-233 form a riboflavin kinase region; that stretch reads IKIKGEVFSG…GDFVEVEVIL (129 aa). 114–119 lines the CDP pocket; that stretch reads GVGEGR. 2 residues coordinate Mg(2+): threonine 143 and asparagine 145. The FMN site is built by threonine 200 and glutamate 208. 213 to 216 lines the CDP pocket; sequence VKLR.

Belongs to the archaeal riboflavin kinase family. The cofactor is Mg(2+).

The enzyme catalyses riboflavin + CTP = CDP + FMN + H(+). It functions in the pathway cofactor biosynthesis; FMN biosynthesis; FMN from riboflavin (CTP route): step 1/1. Functionally, catalyzes the CTP-dependent phosphorylation of riboflavin (vitamin B2) to form flavin mononucleotide (FMN). This chain is Riboflavin kinase (ribK), found in Archaeoglobus fulgidus (strain ATCC 49558 / DSM 4304 / JCM 9628 / NBRC 100126 / VC-16).